A 471-amino-acid chain; its full sequence is E3 SUMO-protein ligase EGR2 (471 aa).

Residues 127-143 are compositionally biased toward low complexity; it reads PASTTASSNVTSASPNP. The tract at residues 127–177 is disordered; it reads PASTTASSNVTSASPNPLATGPLGVCTMSQTQPDLDHLYSPPPPPPYSGCA. The residue at position 246 (lysine 246) is an N6-acetyllysine; by EP300. 2 disordered regions span residues 273–301 and 313–336; these read GGPS…AAAA and RPIL…RPYP. Over residues 280 to 289 the composition is skewed to gly residues; it reads TGPGASGGSE. C2H2-type zinc fingers lie at residues 335 to 359, 365 to 387, and 393 to 415; these read YPCP…IRIH, FQCR…IRTH, and FACD…TKIH. The tract at residues 406 to 471 is disordered; the sequence is DERKRHTKIH…GPCSSRTRTP (66 aa). A compositionally biased stretch (basic residues) spans 410-420; it reads RHTKIHLRQKE. Residues 424–437 are compositionally biased toward low complexity; it reads SAPSSSVPAASTAS.

This sequence belongs to the EGR C2H2-type zinc-finger protein family. In terms of assembly, interacts with HCFC1. Interacts with WWP2. Interacts with UBC9. Interacts with CITED1. Interacts (via phosphorylated form) with SFN. Post-translationally, ubiquitinated by WWP2 leading to proteasomal degradation. In terms of processing, acetylated at Lys-246. May be deacetylated by HDAC6, HDAC10 or SIRT1.

Its subcellular location is the nucleus. Its pathway is protein modification; protein sumoylation. In terms of biological role, sequence-specific DNA-binding transcription factor. Plays a role in hindbrain segmentation by regulating the expression of a subset of homeobox containing genes and in Schwann cell myelination by regulating the expression of genes involved in the formation and maintenance of myelin. Binds to two EGR2-consensus sites EGR2A (5'-CTGTAGGAG-3') and EGR2B (5'-ATGTAGGTG-3') in the HOXB3 enhancer and promotes HOXB3 transcriptional activation. Binds to specific DNA sites located in the promoter region of HOXA4, HOXB2 and ERBB2. Regulates hindbrain segmentation by controlling the expression of Hox genes, such as HOXA4, HOXB3 and HOXB2, and thereby specifying odd and even rhombomeres. Promotes the expression of HOXB3 in the rhombomere r5 in the hindbrain. Regulates myelination in the peripheral nervous system after birth, possibly by regulating the expression of myelin proteins, such as MPZ, and by promoting the differentiation of Schwann cells. Involved in the development of the jaw openener musculature, probably by playing a role in its innervation through trigeminal motor neurons. May play a role in adipogenesis, possibly by regulating the expression of CEBPB. Functionally, E3 SUMO-protein ligase helping SUMO1 conjugation to its coregulators NAB1 and NAB2, whose sumoylation down-regulates EGR2 transcriptional activity. In Sus scrofa (Pig), this protein is E3 SUMO-protein ligase EGR2 (EGR2).